A 375-amino-acid polypeptide reads, in one-letter code: Growth/differentiation factor 8 (375 aa).

A signal peptide spans 1–23; it reads MQKLAVYVYIYLFVQISVDPVAL. A propeptide spanning residues 24 to 266 is cleaved from the precursor; sequence DGSSQPTENT…VTDTPKRSRR (243 aa). The N-linked (GlcNAc...) asparagine glycan is linked to asparagine 71. Disulfide bonds link cysteine 272/cysteine 282, cysteine 281/cysteine 340, cysteine 309/cysteine 372, and cysteine 313/cysteine 374.

The protein belongs to the TGF-beta family. In terms of assembly, homodimer; disulfide-linked.

It is found in the secreted. Its function is as follows. Acts specifically as a negative regulator of skeletal muscle growth. This Excalfactoria chinensis (Blue-breasted quail) protein is Growth/differentiation factor 8 (MSTN).